Consider the following 510-residue polypeptide: GMP synthase [glutamine-hydrolyzing] (510 aa).

Residues 5-195 (LVFIIDFGGQ…LFNICELKGD (191 aa)) enclose the Glutamine amidotransferase type-1 domain. Cysteine 82 serves as the catalytic Nucleophile. Residues histidine 169 and glutamate 171 contribute to the active site. A GMPS ATP-PPase domain is found at 196–385 (WSVTSFAEEK…LGIPHKLVWR (190 aa)). 223-229 (SGGVDSS) serves as a coordination point for ATP.

Homodimer.

It carries out the reaction XMP + L-glutamine + ATP + H2O = GMP + L-glutamate + AMP + diphosphate + 2 H(+). Its pathway is purine metabolism; GMP biosynthesis; GMP from XMP (L-Gln route): step 1/1. Functionally, catalyzes the synthesis of GMP from XMP. The polypeptide is GMP synthase [glutamine-hydrolyzing] (Clostridium tetani (strain Massachusetts / E88)).